We begin with the raw amino-acid sequence, 316 residues long: Acetyl-coenzyme A carboxylase carboxyl transferase subunit alpha (316 aa).

In terms of domain architecture, CoA carboxyltransferase C-terminal spans 39 to 293 (RLQDKSESLT…REQLNSQLHM (255 aa)).

It belongs to the AccA family. As to quaternary structure, acetyl-CoA carboxylase is a heterohexamer composed of biotin carboxyl carrier protein (AccB), biotin carboxylase (AccC) and two subunits each of ACCase subunit alpha (AccA) and ACCase subunit beta (AccD).

The protein resides in the cytoplasm. It carries out the reaction N(6)-carboxybiotinyl-L-lysyl-[protein] + acetyl-CoA = N(6)-biotinyl-L-lysyl-[protein] + malonyl-CoA. Its pathway is lipid metabolism; malonyl-CoA biosynthesis; malonyl-CoA from acetyl-CoA: step 1/1. Its function is as follows. Component of the acetyl coenzyme A carboxylase (ACC) complex. First, biotin carboxylase catalyzes the carboxylation of biotin on its carrier protein (BCCP) and then the CO(2) group is transferred by the carboxyltransferase to acetyl-CoA to form malonyl-CoA. The chain is Acetyl-coenzyme A carboxylase carboxyl transferase subunit alpha from Stutzerimonas stutzeri (strain A1501) (Pseudomonas stutzeri).